The primary structure comprises 293 residues: Movement protein BC1 (293 aa).

It belongs to the begomovirus movement protein BC1 family. In terms of assembly, binds to dimeric supercoiled plasmid DNA. Post-translationally, phosphorylated.

It localises to the host cell membrane. The protein resides in the host microsome membrane. Its subcellular location is the host endoplasmic reticulum membrane. Transports viral genome to neighboring plant cells directly through plasmosdesmata, without any budding. The movement protein allows efficient cell to cell propagation, by bypassing the host cell wall barrier. Begomovirus genome is shuttled out of nucleus by Nuclear shuttle protein (NSP) and the movement protein transports the DNA-NSP complex to cell plasmodesmata and facilitates further movement across the cell wall. This chain is Movement protein BC1, found in Potato yellow mosaic virus (isolate Venezuela) (PYMV).